We begin with the raw amino-acid sequence, 118 residues long: Large ribosomal subunit protein bL19 (118 aa).

The protein belongs to the bacterial ribosomal protein bL19 family.

Its function is as follows. This protein is located at the 30S-50S ribosomal subunit interface and may play a role in the structure and function of the aminoacyl-tRNA binding site. This Ligilactobacillus salivarius (strain UCC118) (Lactobacillus salivarius) protein is Large ribosomal subunit protein bL19.